We begin with the raw amino-acid sequence, 362 residues long: 3-dehydroquinate synthase (362 aa).

NAD(+) contacts are provided by residues 72-77, 106-110, 130-131, lysine 143, and lysine 152; these read DGEAHK, GVIGD, and TT. Residues glutamate 185, histidine 248, and histidine 265 each contribute to the Zn(2+) site.

It belongs to the sugar phosphate cyclases superfamily. Dehydroquinate synthase family. Requires Co(2+) as cofactor. The cofactor is Zn(2+). NAD(+) is required as a cofactor.

Its subcellular location is the cytoplasm. The enzyme catalyses 7-phospho-2-dehydro-3-deoxy-D-arabino-heptonate = 3-dehydroquinate + phosphate. It functions in the pathway metabolic intermediate biosynthesis; chorismate biosynthesis; chorismate from D-erythrose 4-phosphate and phosphoenolpyruvate: step 2/7. Its function is as follows. Catalyzes the conversion of 3-deoxy-D-arabino-heptulosonate 7-phosphate (DAHP) to dehydroquinate (DHQ). This is 3-dehydroquinate synthase from Laribacter hongkongensis (strain HLHK9).